The primary structure comprises 305 residues: tRNA uridine(34) hydroxylase (305 aa).

Residues 125–219 (ADENTVVVDT…YLEEVPREQS (95 aa)) form the Rhodanese domain. Catalysis depends on Cys179, which acts as the Cysteine persulfide intermediate.

Belongs to the TrhO family.

It carries out the reaction uridine(34) in tRNA + AH2 + O2 = 5-hydroxyuridine(34) in tRNA + A + H2O. Functionally, catalyzes oxygen-dependent 5-hydroxyuridine (ho5U) modification at position 34 in tRNAs. In Brucella ovis (strain ATCC 25840 / 63/290 / NCTC 10512), this protein is tRNA uridine(34) hydroxylase.